The chain runs to 138 residues: Ribulose bisphosphate carboxylase small subunit (138 aa).

The protein belongs to the RuBisCO small chain family. As to quaternary structure, heterohexadecamer of 8 large and 8 small subunits.

The protein resides in the plastid. It is found in the chloroplast. Its function is as follows. RuBisCO catalyzes two reactions: the carboxylation of D-ribulose 1,5-bisphosphate, the primary event in carbon dioxide fixation, as well as the oxidative fragmentation of the pentose substrate in the photorespiration process. Both reactions occur simultaneously and in competition at the same active site. Although the small subunit is not catalytic it is essential for maximal activity. This chain is Ribulose bisphosphate carboxylase small subunit, found in Cyanidium caldarium (Red alga).